Consider the following 299-residue polypeptide: Phosphatidylcholine-sterol acyltransferase (299 aa).

N30 carries N-linked (GlcNAc...) asparagine glycosylation. Catalysis depends on S127, which acts as the Nucleophile. N-linked (GlcNAc...) asparagine glycosylation occurs at N185. C226 and C269 are oxidised to a cystine. Active-site charge relay system residues include D258 and H290.

This sequence belongs to the AB hydrolase superfamily. Lipase family.

It localises to the secreted. It carries out the reaction a sterol + a 1,2-diacyl-sn-glycero-3-phosphocholine = a sterol ester + a 1-acyl-sn-glycero-3-phosphocholine. Its activity is regulated as follows. APOA1 is the most potent activator in plasma. Also activated by APOE, APOC1 and APOA4. Central enzyme in the extracellular metabolism of plasma lipoproteins. Synthesized mainly in the liver and secreted into plasma where it converts cholesterol and phosphatidylcholines (lecithins) to cholesteryl esters and lysophosphatidylcholines on the surface of high and low density lipoproteins (HDLs and LDLs). The cholesterol ester is then transported back to the liver. Has a preference for plasma 16:0-18:2 or 18:O-18:2 phosphatidylcholines. Also produced in the brain by primary astrocytes, and esterifies free cholesterol on nascent APOE-containing lipoproteins secreted from glia and influences cerebral spinal fluid (CSF) APOE- and APOA1 levels. Together with APOE and the cholesterol transporter ABCA1, plays a key role in the maturation of glial-derived, nascent lipoproteins. Required for remodeling high-density lipoprotein particles into their spherical forms. The protein is Phosphatidylcholine-sterol acyltransferase (LCAT) of Eliomys quercinus (Garden dormouse).